A 159-amino-acid polypeptide reads, in one-letter code: 2-C-methyl-D-erythritol 2,4-cyclodiphosphate synthase (159 aa).

A divalent metal cation contacts are provided by aspartate 9 and histidine 11. 4-CDP-2-C-methyl-D-erythritol 2-phosphate contacts are provided by residues 9-11 and 35-36; these read DVH and HS. Histidine 43 serves as a coordination point for a divalent metal cation. 4-CDP-2-C-methyl-D-erythritol 2-phosphate-binding positions include 57–59, 62–66, 133–136, phenylalanine 140, and arginine 143; these read DIG, FPDTD, and TTTE.

This sequence belongs to the IspF family. Homotrimer. A divalent metal cation is required as a cofactor.

The catalysed reaction is 4-CDP-2-C-methyl-D-erythritol 2-phosphate = 2-C-methyl-D-erythritol 2,4-cyclic diphosphate + CMP. The protein operates within isoprenoid biosynthesis; isopentenyl diphosphate biosynthesis via DXP pathway; isopentenyl diphosphate from 1-deoxy-D-xylulose 5-phosphate: step 4/6. Its function is as follows. Involved in the biosynthesis of isopentenyl diphosphate (IPP) and dimethylallyl diphosphate (DMAPP), two major building blocks of isoprenoid compounds. Catalyzes the conversion of 4-diphosphocytidyl-2-C-methyl-D-erythritol 2-phosphate (CDP-ME2P) to 2-C-methyl-D-erythritol 2,4-cyclodiphosphate (ME-CPP) with a corresponding release of cytidine 5-monophosphate (CMP). In Mannheimia succiniciproducens (strain KCTC 0769BP / MBEL55E), this protein is 2-C-methyl-D-erythritol 2,4-cyclodiphosphate synthase.